The primary structure comprises 647 residues: Cartilage acidic protein 1 (647 aa).

An N-terminal signal peptide occupies residues 1–30; sequence MMLPADFFVPVSKMMLLALLLSIIICCGGA. The stretch at 48–90 is one FG-GAP 1; atypical repeat; sequence DYDSNPTQLNYGVAITDVDNDGDFEVVVAGYNGPNLVLKYIKE. Residues 107-149 form an FG-GAP 2; atypical repeat; sequence YALRDRQGNAIGVAACDIDGDGREEIYFLNTNNAFSGIATYSD. One copy of the FG-GAP 3; atypical repeat lies at 285–335; it reads TGVDDVYQHGRGVALADFNRDGKVDIVYGNWNGPHRLFLQMNTNGKVRFRD. The FG-GAP 4; atypical repeat unit spans residues 397–439; that stretch reads GDASEPDGRGTGGAVTDFDGDGMLDLILSHGESMAQPLSVFKG. In terms of domain architecture, EGF-like spans 561 to 607; sequence DTDECIQFPFVCPREKPVCINTYGGYKCRPNRRCSRGFEPNEDGTAC. 3 disulfide bridges follow: Cys565-Cys579, Cys572-Cys588, and Cys594-Cys607.

The protein localises to the secreted. The protein resides in the extracellular space. It localises to the extracellular matrix. This chain is Cartilage acidic protein 1 (crtac1), found in Xenopus tropicalis (Western clawed frog).